Here is a 297-residue protein sequence, read N- to C-terminus: Protein MIZU-KUSSEI 1 (297 aa).

Expressed in root meristematic region, cortical cells, lateral root cap cells, columella cells of the root cap, mature region of the roots and leaf hydathodes.

Its subcellular location is the endoplasmic reticulum membrane. Plays a role in lateral root development by maintaining auxin levels. This function requires GNOM (GN/MIZ2) activity. Negatively regulates cytokinin sensitivity on root development. Positively regulates hydrotropism in roots. This Arabidopsis thaliana (Mouse-ear cress) protein is Protein MIZU-KUSSEI 1 (MIZ1).